A 278-amino-acid chain; its full sequence is Non-heme chloroperoxidase (278 aa).

Positions 26–264 (PVVLIHGFPL…GAPHGLLWTH (239 aa)) constitute an AB hydrolase-1 domain. Residues Ser99, Asp229, and His258 contribute to the active site.

This sequence belongs to the AB hydrolase superfamily. Bacterial non-heme haloperoxidase / perhydrolase family. Homodimer.

This chain is Non-heme chloroperoxidase (cpo), found in Kitasatospora aureofaciens (Streptomyces aureofaciens).